Consider the following 815-residue polypeptide: DNA topoisomerase 1 (815 aa).

The Toprim domain occupies 3–119 (KHLLIVESPA…QRIVFTEITP (117 aa)). The Mg(2+) site is built by Glu-9 and Asp-82. The region spanning 133-573 (ASDLVDAQQA…KFWVPFKELV (441 aa)) is the Topo IA-type catalytic domain. Residues 167–172 (SAGRVQ) are interaction with DNA. The active-site O-(5'-phospho-DNA)-tyrosine intermediate is Tyr-308. Positions 760-815 (GKPARKNFSTKKTATKNETRKQTTKKRTTDAKATKKVSDKPVKKQIKKRIAPNITE) are disordered. Basic and acidic residues predominate over residues 774–801 (TKNETRKQTTKKRTTDAKATKKVSDKPV).

It belongs to the type IA topoisomerase family. In terms of assembly, monomer. Mg(2+) is required as a cofactor.

It carries out the reaction ATP-independent breakage of single-stranded DNA, followed by passage and rejoining.. Functionally, releases the supercoiling and torsional tension of DNA, which is introduced during the DNA replication and transcription, by transiently cleaving and rejoining one strand of the DNA duplex. Introduces a single-strand break via transesterification at a target site in duplex DNA. The scissile phosphodiester is attacked by the catalytic tyrosine of the enzyme, resulting in the formation of a DNA-(5'-phosphotyrosyl)-enzyme intermediate and the expulsion of a 3'-OH DNA strand. The free DNA strand then undergoes passage around the unbroken strand, thus removing DNA supercoils. Finally, in the religation step, the DNA 3'-OH attacks the covalent intermediate to expel the active-site tyrosine and restore the DNA phosphodiester backbone. The protein is DNA topoisomerase 1 of Xylella fastidiosa (strain 9a5c).